The following is a 97-amino-acid chain: Large ribosomal subunit protein eL30 (97 aa).

The protein belongs to the eukaryotic ribosomal protein eL30 family.

This is Large ribosomal subunit protein eL30 from Methanoregula boonei (strain DSM 21154 / JCM 14090 / 6A8).